The primary structure comprises 686 residues: Gamma-aminobutyric acid receptor alpha-like (686 aa).

An N-terminal signal peptide occupies residues 1-58 (MCTMPATRDASGSGDASTDLIAARSLSSHQGQRSNLRIFKLLISCCLLMLCIYPNAWP). The Extracellular portion of the chain corresponds to 97–393 (SSWLTQSNNH…NFHLQRHMGN (297 aa)). Asparagine 108 carries N-linked (GlcNAc...) asparagine glycosylation. Cysteines 233 and 247 form a disulfide. N-linked (GlcNAc...) asparagine glycosylation is present at asparagine 292. 3 helical membrane passes run 394–414 (FLIQVYGPCCLLVVLSWVSFW), 424–441 (VSLGITTVLTMTFLGLEA), and 456–476 (FFVFLSFGFIFATILQFAVVH). Over 477–650 (YYTKYGSGEC…YNSVSKIDRA (174 aa)) the chain is Cytoplasmic. The segment at 570 to 641 (KPPRADSDED…RRKGKRTPQY (72 aa)) is disordered. Residues 586–596 (QLRANEAPTTS) show a composition bias toward polar residues. Low complexity predominate over residues 597–609 (AAAAAAQAAAQAA). Residues 651–671 (SRIVFPLLFILINVFYWYGYL) traverse the membrane as a helical segment.

It belongs to the ligand-gated ion channel (TC 1.A.9) family. Gamma-aminobutyric acid receptor (TC 1.A.9.5) subfamily. In terms of assembly, generally pentameric. There are five types of GABA(A) receptor chains: alpha, beta, gamma, delta, and rho. Interacts with Lcch3 (beta chain).

The protein resides in the postsynaptic cell membrane. Its subcellular location is the cell membrane. In terms of biological role, GABA, an inhibitory neurotransmitter, mediates neuronal inhibition by binding to the GABA receptor and opening an integral chloride channel. May combine with the ligand-gated ion channel subunit Lcch3 to form cation-selective GABA-gated ion channels. The polypeptide is Gamma-aminobutyric acid receptor alpha-like (Grd) (Drosophila melanogaster (Fruit fly)).